Reading from the N-terminus, the 144-residue chain is Large ribosomal subunit protein uL16 (144 aa).

Belongs to the universal ribosomal protein uL16 family. In terms of assembly, part of the 50S ribosomal subunit.

In terms of biological role, binds 23S rRNA and is also seen to make contacts with the A and possibly P site tRNAs. This Clostridium beijerinckii (strain ATCC 51743 / NCIMB 8052) (Clostridium acetobutylicum) protein is Large ribosomal subunit protein uL16.